The following is a 293-amino-acid chain: MFKGSNVALITPFKNNELDVEAYIKLIHFQISNGTNGLVPAGTTGESPTLSHDEHQKVIDLCVKESNGKNIVIAGTGSNSTKEAISLTTHAEKAGADAALIVTPYYNKPTQEGLYQHYKAINDKCGIPIIIYNIPGRSVIDMSVDTMARLFELKNIVGVKDATGDLDRVNQQKDKMGTDFVQLTGNDDNALEFNNRGGVGSISVTANIAPKLCSDFQKASKIENNESKLEAIRLDKILQPIHSSMFIESNPSPVKYAAKLLGLCDDEVRLPLVKVTDPTKDIVKEALVSANLL.

A pyruvate-binding site is contributed by threonine 44. Tyrosine 132 (proton donor/acceptor) is an active-site residue. The active-site Schiff-base intermediate with substrate is the lysine 160. Isoleucine 202 contributes to the pyruvate binding site.

Belongs to the DapA family. Homotetramer; dimer of dimers.

Its subcellular location is the cytoplasm. It catalyses the reaction L-aspartate 4-semialdehyde + pyruvate = (2S,4S)-4-hydroxy-2,3,4,5-tetrahydrodipicolinate + H2O + H(+). It functions in the pathway amino-acid biosynthesis; L-lysine biosynthesis via DAP pathway; (S)-tetrahydrodipicolinate from L-aspartate: step 3/4. Catalyzes the condensation of (S)-aspartate-beta-semialdehyde [(S)-ASA] and pyruvate to 4-hydroxy-tetrahydrodipicolinate (HTPA). The protein is 4-hydroxy-tetrahydrodipicolinate synthase of Pelagibacter ubique (strain HTCC1062).